Reading from the N-terminus, the 169-residue chain is Ribosome-binding factor A (169 aa).

The segment at 124 to 169 (AGAKHAGDADPYKSDIPEDVEIDEDDFDEEDEDLIDDEELDEDGNK) is disordered. Over residues 128–139 (HAGDADPYKSDI) the composition is skewed to basic and acidic residues. A compositionally biased stretch (acidic residues) spans 140-169 (PEDVEIDEDDFDEEDEDLIDDEELDEDGNK).

The protein belongs to the RbfA family. Monomer. Binds 30S ribosomal subunits, but not 50S ribosomal subunits or 70S ribosomes.

Its subcellular location is the cytoplasm. In terms of biological role, one of several proteins that assist in the late maturation steps of the functional core of the 30S ribosomal subunit. Associates with free 30S ribosomal subunits (but not with 30S subunits that are part of 70S ribosomes or polysomes). Required for efficient processing of 16S rRNA. May interact with the 5'-terminal helix region of 16S rRNA. The polypeptide is Ribosome-binding factor A (Arthrobacter sp. (strain FB24)).